The following is a 47-amino-acid chain: Short transmembrane mitochondrial protein 1 (47 aa).

Residues 7–23 (GFTLGNVVGMYLAQNYD) form a helical membrane-spanning segment.

It belongs to the STMP1 family. Interacts with components of the ubiquinol-cytochrome c oxidoreductase (cytochrome b-c1 complex, complex III, CIII), such as UQCRC1/QCR1, UQCRC2/QCR2 and UQCR10/QCR9. Interacts with components of the cytochrome c oxidase (mitochondrial respiratory chain complex IV) complex, such as MT-CO2. Expressed in monocytes and dendritic cells.

It is found in the mitochondrion inner membrane. The protein resides in the mitochondrion outer membrane. Its subcellular location is the mitochondrion intermembrane space. Functionally, microprotein involved in mitochondrial respiratory chain complex III (ubiquinol-cytochrome c oxidoreductase) and complex IV (mitochondrial cytochrome c oxidase complex) assembly. Required for the formation of mitochondrial supercomplexes (SCs). Also required for the activation of the NLRP3 inflammasome. The chain is Short transmembrane mitochondrial protein 1 from Homo sapiens (Human).